The sequence spans 473 residues: Siroheme synthase (473 aa).

The interval 1–203 is precorrin-2 dehydrogenase /sirohydrochlorin ferrochelatase; that stretch reads MTLFPIFADL…QQPGLAEQEL (203 aa). Residues 22-23 and 43-44 contribute to the NAD(+) site; these read AV and PR. Serine 128 carries the post-translational modification Phosphoserine. The segment at 216–473 is uroporphyrinogen-III C-methyltransferase; the sequence is GSVVLVGAGP…GLPGPQALAA (258 aa). An S-adenosyl-L-methionine-binding site is contributed by proline 225. Residue aspartate 248 is the Proton acceptor of the active site. Catalysis depends on lysine 270, which acts as the Proton donor. S-adenosyl-L-methionine-binding positions include 302 to 304, isoleucine 307, 332 to 333, methionine 384, and glycine 413; these read GGD and TA.

This sequence in the N-terminal section; belongs to the precorrin-2 dehydrogenase / sirohydrochlorin ferrochelatase family. The protein in the C-terminal section; belongs to the precorrin methyltransferase family.

The enzyme catalyses uroporphyrinogen III + 2 S-adenosyl-L-methionine = precorrin-2 + 2 S-adenosyl-L-homocysteine + H(+). It catalyses the reaction precorrin-2 + NAD(+) = sirohydrochlorin + NADH + 2 H(+). The catalysed reaction is siroheme + 2 H(+) = sirohydrochlorin + Fe(2+). It participates in cofactor biosynthesis; adenosylcobalamin biosynthesis; precorrin-2 from uroporphyrinogen III: step 1/1. Its pathway is cofactor biosynthesis; adenosylcobalamin biosynthesis; sirohydrochlorin from precorrin-2: step 1/1. The protein operates within porphyrin-containing compound metabolism; siroheme biosynthesis; precorrin-2 from uroporphyrinogen III: step 1/1. It functions in the pathway porphyrin-containing compound metabolism; siroheme biosynthesis; siroheme from sirohydrochlorin: step 1/1. It participates in porphyrin-containing compound metabolism; siroheme biosynthesis; sirohydrochlorin from precorrin-2: step 1/1. Functionally, multifunctional enzyme that catalyzes the SAM-dependent methylations of uroporphyrinogen III at position C-2 and C-7 to form precorrin-2 via precorrin-1. Then it catalyzes the NAD-dependent ring dehydrogenation of precorrin-2 to yield sirohydrochlorin. Finally, it catalyzes the ferrochelation of sirohydrochlorin to yield siroheme. The sequence is that of Siroheme synthase from Bordetella parapertussis (strain 12822 / ATCC BAA-587 / NCTC 13253).